A 391-amino-acid polypeptide reads, in one-letter code: Sister chromatid cohesion protein DCC1 (391 aa).

The protein belongs to the DCC1 family. As to quaternary structure, component of the ctf18-RFC complex which consists of ctf18, ctf8, dscc1 and the RFC complex.

It localises to the nucleus. Its function is as follows. Loads pcna onto primed templates regulating velocity, spacing and restart activity of replication forks. May couple DNA replication to sister chromatid cohesion. The protein is Sister chromatid cohesion protein DCC1 (dscc1) of Xenopus tropicalis (Western clawed frog).